Reading from the N-terminus, the 280-residue chain is Energy-coupling factor transporter ATP-binding protein EcfA1 (280 aa).

The 235-residue stretch at 7 to 241 (IEVAHLKYEY…GQRLLDLGLD (235 aa)) folds into the ABC transporter domain. 41 to 48 (GHNGSGKS) contributes to the ATP binding site.

The protein belongs to the ABC transporter superfamily. Energy-coupling factor EcfA family. Forms a stable energy-coupling factor (ECF) transporter complex composed of 2 membrane-embedded substrate-binding proteins (S component), 2 ATP-binding proteins (A component) and 2 transmembrane proteins (T component).

It localises to the cell membrane. In terms of biological role, ATP-binding (A) component of a common energy-coupling factor (ECF) ABC-transporter complex. Unlike classic ABC transporters this ECF transporter provides the energy necessary to transport a number of different substrates. The polypeptide is Energy-coupling factor transporter ATP-binding protein EcfA1 (Latilactobacillus sakei subsp. sakei (strain 23K) (Lactobacillus sakei subsp. sakei)).